A 399-amino-acid chain; its full sequence is Elongation factor Tu (399 aa).

The tr-type G domain occupies 10–209 (KPHVNIGTIG…AVDDYIPTPV (200 aa)). Residues 19–26 (GHVDHGKT) form a G1 region. 19 to 26 (GHVDHGKT) is a GTP binding site. Mg(2+) is bound at residue T26. Residues 62–66 (GITIN) are G2. The G3 stretch occupies residues 83-86 (DCPG). GTP contacts are provided by residues 83–87 (DCPGH) and 138–141 (NKCD). Residues 138–141 (NKCD) are G4. The interval 175 to 177 (SAY) is G5.

It belongs to the TRAFAC class translation factor GTPase superfamily. Classic translation factor GTPase family. EF-Tu/EF-1A subfamily. As to quaternary structure, monomer.

It is found in the cytoplasm. It carries out the reaction GTP + H2O = GDP + phosphate + H(+). Functionally, GTP hydrolase that promotes the GTP-dependent binding of aminoacyl-tRNA to the A-site of ribosomes during protein biosynthesis. This Bifidobacterium longum (strain DJO10A) protein is Elongation factor Tu.